The sequence spans 316 residues: Porphobilinogen deaminase (316 aa).

C245 carries the post-translational modification S-(dipyrrolylmethanemethyl)cysteine.

This sequence belongs to the HMBS family. In terms of assembly, monomer. The cofactor is dipyrromethane.

The catalysed reaction is 4 porphobilinogen + H2O = hydroxymethylbilane + 4 NH4(+). It functions in the pathway porphyrin-containing compound metabolism; protoporphyrin-IX biosynthesis; coproporphyrinogen-III from 5-aminolevulinate: step 2/4. The protein operates within porphyrin-containing compound metabolism; chlorophyll biosynthesis. In terms of biological role, tetrapolymerization of the monopyrrole PBG into the hydroxymethylbilane pre-uroporphyrinogen in several discrete steps. The polypeptide is Porphobilinogen deaminase (Prochlorococcus marinus (strain MIT 9515)).